A 223-amino-acid polypeptide reads, in one-letter code: Cytidylate kinase (223 aa).

10–18 (GPAGSGKSS) is an ATP binding site.

This sequence belongs to the cytidylate kinase family. Type 1 subfamily.

It is found in the cytoplasm. The catalysed reaction is CMP + ATP = CDP + ADP. It carries out the reaction dCMP + ATP = dCDP + ADP. The protein is Cytidylate kinase of Pseudothermotoga lettingae (strain ATCC BAA-301 / DSM 14385 / NBRC 107922 / TMO) (Thermotoga lettingae).